A 95-amino-acid polypeptide reads, in one-letter code: Large ribosomal subunit protein uL23 (95 aa).

This sequence belongs to the universal ribosomal protein uL23 family. As to quaternary structure, contacts protein L29, and trigger factor when it is bound to the ribosome. Part of the 50S ribosomal subunit.

Its function is as follows. One of the early assembly proteins it binds 23S rRNA. One of the proteins that surrounds the polypeptide exit tunnel on the outside of the ribosome. Forms the main docking site for trigger factor binding to the ribosome. This Geobacillus stearothermophilus (Bacillus stearothermophilus) protein is Large ribosomal subunit protein uL23.